The following is a 278-amino-acid chain: 2,5-diketo-D-gluconic acid reductase A (278 aa).

Residue Y50 is the Proton donor of the active site. Residue H108 participates in substrate binding. 188 to 242 (GPLGQGKYDLFGAEPVTAAAAAHGKTPAQAVLRWHLQKGFVVFPKSVRRERLEEN) provides a ligand contact to NADP(+). The disordered stretch occupies residues 259-278 (DAMDPGDGSGRVSAHPDEVD).

Belongs to the aldo/keto reductase family. In terms of assembly, monomer.

It is found in the cytoplasm. It catalyses the reaction 2-dehydro-L-idonate + NADP(+) = 2,5-didehydro-D-gluconate + NADPH + H(+). Its activity is regulated as follows. Inhibited by Zn(2+), Fe(3+), Cu(2+) and Ni(2+). Catalyzes the reduction of 2,5-diketo-D-gluconic acid (25DKG) to 2-keto-L-gulonic acid (2KLG). 5-keto-D-fructose and dihydroxyacetone can also serve as substrates. 25DKGR-A exhibits a greater selectivity for the substrate and higher thermal stability than 25DKGR-B. In Corynebacterium sp. (strain ATCC 31090), this protein is 2,5-diketo-D-gluconic acid reductase A (dkgA).